Consider the following 40-residue polypeptide: U4-ctenitoxin-Co1c (40 aa).

4 disulfide bridges follow: Cys3–Cys20, Cys10–Cys26, Cys19–Cys40, and Cys28–Cys38.

As to expression, expressed by the venom gland.

The protein localises to the secreted. Functionally, not toxic to mice by intracerebroventricular injection. The sequence is that of U4-ctenitoxin-Co1c from Ctenus ornatus (Brazilian spider).